The following is a 172-amino-acid chain: 3-hydroxydecanoyl-[acyl-carrier-protein] dehydratase (172 aa).

The active site involves His71.

It belongs to the thioester dehydratase family. FabA subfamily. Homodimer.

It localises to the cytoplasm. It carries out the reaction a (3R)-hydroxyacyl-[ACP] = a (2E)-enoyl-[ACP] + H2O. The catalysed reaction is (3R)-hydroxydecanoyl-[ACP] = (2E)-decenoyl-[ACP] + H2O. It catalyses the reaction (2E)-decenoyl-[ACP] = (3Z)-decenoyl-[ACP]. Its pathway is lipid metabolism; fatty acid biosynthesis. Its function is as follows. Necessary for the introduction of cis unsaturation into fatty acids. Catalyzes the dehydration of (3R)-3-hydroxydecanoyl-ACP to E-(2)-decenoyl-ACP and then its isomerization to Z-(3)-decenoyl-ACP. Can catalyze the dehydratase reaction for beta-hydroxyacyl-ACPs with saturated chain lengths up to 16:0, being most active on intermediate chain length. The polypeptide is 3-hydroxydecanoyl-[acyl-carrier-protein] dehydratase (Yersinia enterocolitica serotype O:8 / biotype 1B (strain NCTC 13174 / 8081)).